A 51-amino-acid chain; its full sequence is Large ribosomal subunit protein eL39 (51 aa).

The tract at residues 32 to 51 (KGSVKQHPKMRHWRRKNLKK) is disordered. Positions 33 to 51 (GSVKQHPKMRHWRRKNLKK) are enriched in basic residues.

The protein belongs to the eukaryotic ribosomal protein eL39 family.

This is Large ribosomal subunit protein eL39 from Methanococcus maripaludis (strain C5 / ATCC BAA-1333).